The primary structure comprises 339 residues: Heme A synthase (339 aa).

The next 8 helical transmembrane spans lie at V7 to I27, H92 to I112, I126 to L146, L159 to I179, A199 to I219, V254 to F274, A291 to V311, and P312 to Y332. A heme-binding site is contributed by H258. Position 319 (H319) interacts with heme.

It belongs to the COX15/CtaA family. Type 2 subfamily. Interacts with CtaB. Requires heme b as cofactor.

The protein resides in the cell membrane. It catalyses the reaction Fe(II)-heme o + 2 A + H2O = Fe(II)-heme a + 2 AH2. The protein operates within porphyrin-containing compound metabolism; heme A biosynthesis; heme A from heme O: step 1/1. Its function is as follows. Catalyzes the conversion of heme O to heme A by two successive hydroxylations of the methyl group at C8. The first hydroxylation forms heme I, the second hydroxylation results in an unstable dihydroxymethyl group, which spontaneously dehydrates, resulting in the formyl group of heme A. This Flavobacterium psychrophilum (strain ATCC 49511 / DSM 21280 / CIP 103535 / JIP02/86) protein is Heme A synthase.